The chain runs to 92 residues: RIIa domain-containing protein 1 (92 aa).

In terms of domain architecture, RIIa spans 43–77; sequence KEVEWLISGFFREIFLKRPDNILEFAADYFTDPRL.

The polypeptide is RIIa domain-containing protein 1 (RIIAD1) (Homo sapiens (Human)).